A 492-amino-acid chain; its full sequence is Asparagine--tRNA ligase, mitochondrial (492 aa).

Belongs to the class-II aminoacyl-tRNA synthetase family.

Its subcellular location is the mitochondrion matrix. It catalyses the reaction tRNA(Asn) + L-asparagine + ATP = L-asparaginyl-tRNA(Asn) + AMP + diphosphate + H(+). In terms of biological role, catalyzes the attachment of asparagine to tRNA(Asn) in the mitochondrion. The chain is Asparagine--tRNA ligase, mitochondrial (SLM5) from Saccharomyces cerevisiae (strain ATCC 204508 / S288c) (Baker's yeast).